The sequence spans 502 residues: Lysine--tRNA ligase (502 aa).

Positions 409 and 416 each coordinate Mg(2+).

The protein belongs to the class-II aminoacyl-tRNA synthetase family. Homodimer. Mg(2+) is required as a cofactor.

It localises to the cytoplasm. It carries out the reaction tRNA(Lys) + L-lysine + ATP = L-lysyl-tRNA(Lys) + AMP + diphosphate. This chain is Lysine--tRNA ligase, found in Prochlorococcus marinus (strain SARG / CCMP1375 / SS120).